Consider the following 377-residue polypeptide: 3-dehydroquinate synthase (377 aa).

Residues 115–119, 139–140, lysine 152, and lysine 161 each bind NAD(+); these read GVIGD and TS. Residues glutamate 194, histidine 256, and histidine 275 each contribute to the Zn(2+) site.

Belongs to the sugar phosphate cyclases superfamily. Dehydroquinate synthase family. Co(2+) serves as cofactor. Requires Zn(2+) as cofactor. The cofactor is NAD(+).

The protein resides in the cytoplasm. The catalysed reaction is 7-phospho-2-dehydro-3-deoxy-D-arabino-heptonate = 3-dehydroquinate + phosphate. Its pathway is metabolic intermediate biosynthesis; chorismate biosynthesis; chorismate from D-erythrose 4-phosphate and phosphoenolpyruvate: step 2/7. Its function is as follows. Catalyzes the conversion of 3-deoxy-D-arabino-heptulosonate 7-phosphate (DAHP) to dehydroquinate (DHQ). This chain is 3-dehydroquinate synthase, found in Rhizobium rhizogenes (strain K84 / ATCC BAA-868) (Agrobacterium radiobacter).